Reading from the N-terminus, the 697-residue chain is PAN2-PAN3 deadenylation complex subunit PAN3 (697 aa).

The C3H1-type zinc-finger motif lies at 7–36 (TAKDTLCKNILIYGYCKYENKGCAFSHNRQ). The segment at 40 to 67 (QQQQATNTSNNSTSVITPNSANSTASSA) is disordered. Short sequence motifs (PABPC-interacting motif-2 (PAM-2)) lie at residues 69 to 89 (LSSKKKFNLNTPSFQPSVSNL) and 106 to 126 (FKPENGVSEPDTVDSPTTQRP). Residues 106–240 (FKPENGVSEP…SAPTPGSETP (135 aa)) are disordered. Positions 119 to 153 (DSPTTQRPFTSKRFNVSTPSFTPTNFDFANNSNAD) are enriched in polar residues. The span at 172–187 (QNQQQQQQQQQQQQKQ) shows a compositional bias: low complexity. The segment covering 212 to 224 (GVSQSSPSTNPYF) has biased composition (polar residues). A pseudokinase domain region spans residues 308-576 (QSLSHSNLPE…DLNEFSQRLT (269 aa)). ATP contacts are provided by residues Arg-361, 416 to 423 (DYYPNSIS), and 470 to 471 (SK). The stretch at 577 to 615 (PKMFNIIDSLQNSSDFIEGQLTSELENARLFRLMTKLNY) forms a coiled coil. The interval 616–697 (LIHDNSNSEN…IDTKFRLMRE (82 aa)) is knob domain.

The protein belongs to the protein kinase superfamily. PAN3 family. Homodimer. Forms a heterotrimer with a catalytic subunit PAN2 to form the poly(A)-nuclease (PAN) deadenylation complex. Interacts (via PAM-2 motif) with poly(A)-binding protein PAB1 (via PABC domain), conferring substrate specificity of the enzyme complex.

It is found in the cytoplasm. In terms of biological role, regulatory subunit of the poly(A)-nuclease (PAN) deadenylation complex, one of two cytoplasmic mRNA deadenylases involved in mRNA turnover. PAN specifically shortens poly(A) tails of RNA and the activity is stimulated by poly(A)-binding protein PAB1. PAN deadenylation is followed by rapid degradation of the shortened mRNA tails by the CCR4-NOT complex. Deadenylated mRNAs are then degraded by two alternative mechanisms, namely exosome-mediated 3'-5' exonucleolytic degradation, or deadenylation-dependent mRNA decaping and subsequent 5'-3' exonucleolytic degradation by XRN1. May also be involved in post-transcriptional maturation of mRNA poly(A) tails. PAN3 acts as a positive regulator for PAN activity, recruiting the catalytic subunit PAN2 to mRNA via its interaction with RNA and with PAB1. The polypeptide is PAN2-PAN3 deadenylation complex subunit PAN3 (Candida albicans (strain SC5314 / ATCC MYA-2876) (Yeast)).